The chain runs to 665 residues: Fructose-1,6-bisphosphatase class 3 (665 aa).

It belongs to the FBPase class 3 family. Mn(2+) is required as a cofactor.

It carries out the reaction beta-D-fructose 1,6-bisphosphate + H2O = beta-D-fructose 6-phosphate + phosphate. It functions in the pathway carbohydrate biosynthesis; gluconeogenesis. This chain is Fructose-1,6-bisphosphatase class 3, found in Alkaliphilus metalliredigens (strain QYMF).